Here is a 110-residue protein sequence, read N- to C-terminus: NADH-quinone oxidoreductase subunit K (110 aa).

3 helical membrane-spanning segments follow: residues 7–27, 31–51, and 73–93; these read LGSYLLVGAMLFCLGLYGVFV, IIAILMSIELMLNAVNINFIA, and IFVIVVAAAEIAVGLALVIAI.

It belongs to the complex I subunit 4L family. In terms of assembly, NDH-1 is composed of 14 different subunits. Subunits NuoA, H, J, K, L, M, N constitute the membrane sector of the complex.

The protein localises to the cell membrane. It carries out the reaction a quinone + NADH + 5 H(+)(in) = a quinol + NAD(+) + 4 H(+)(out). In terms of biological role, NDH-1 shuttles electrons from NADH, via FMN and iron-sulfur (Fe-S) centers, to quinones in the respiratory chain. The immediate electron acceptor for the enzyme in this species is believed to be a menaquinone. Couples the redox reaction to proton translocation (for every two electrons transferred, four hydrogen ions are translocated across the cytoplasmic membrane), and thus conserves the redox energy in a proton gradient. The polypeptide is NADH-quinone oxidoreductase subunit K (Desulfitobacterium hafniense (strain DSM 10664 / DCB-2)).